The chain runs to 204 residues: MVCGESNAAAISAKYVDNDPLQRPAARATPANESHICDLMPPKGWKKDAQGNYPTTSYIKEQEKLTVDDLLFPRSIITSLAKDAVHQAVQTAEQDPRVMLSKDASLALQRSSTVFVNHLLMHARQIAQSNDRKSCSGEDVLKALDQIGLAGFESVVRERVVEYEKEVQRRRAEKTPAADEGQAEEGDAADEEEGSHKRAKLDEH.

Over residues 165-177 (KEVQRRRAEKTPA) the composition is skewed to basic and acidic residues. Residues 165–204 (KEVQRRRAEKTPAADEGQAEEGDAADEEEGSHKRAKLDEH) are disordered. The span at 181 to 193 (GQAEEGDAADEEE) shows a compositional bias: acidic residues. The span at 194–204 (GSHKRAKLDEH) shows a compositional bias: basic and acidic residues.

Heterotetramer. Consists of four subunits: POL2, DPB2, DPB3 and DPB4.

Its subcellular location is the nucleus. As accessory component of the DNA polymerase epsilon (DNA polymerase II) participates in chromosomal DNA replication. This is DNA polymerase epsilon subunit D (DPB4) from Eremothecium gossypii (strain ATCC 10895 / CBS 109.51 / FGSC 9923 / NRRL Y-1056) (Yeast).